A 295-amino-acid chain; its full sequence is Protein FAM221A (295 aa).

Residues 244-295 (SEPPGIDKQVSSMRLSEEDDMAYFERRYQERLRKEKEHKRQKNSKPPTTQRP) form a disordered region. Positions 266-278 (YFERRYQERLRKE) are enriched in basic and acidic residues.

Belongs to the FAM221 family.

This is Protein FAM221A (fam221a) from Xenopus laevis (African clawed frog).